Consider the following 203-residue polypeptide: Probable host range protein 2-3 (203 aa).

The tract at residues 182–203 is disordered; sequence LEEEDEEKIADTGNDNQKDAED.

The protein belongs to the poxviridae C7 protein family.

Plays a role for multiplication of the virus in different cell types. This is Probable host range protein 2-3 from Myxoma virus (strain Lausanne) (MYXV).